Here is a 206-residue protein sequence, read N- to C-terminus: Orotate phosphoribosyltransferase (206 aa).

Residues R93, K97, H99, and 119 to 127 each bind 5-phospho-alpha-D-ribose 1-diphosphate; that span reads EDLISTGGT. Orotate is bound at residue S123.

The protein belongs to the purine/pyrimidine phosphoribosyltransferase family. PyrE subfamily. Homodimer. It depends on Mg(2+) as a cofactor.

The enzyme catalyses orotidine 5'-phosphate + diphosphate = orotate + 5-phospho-alpha-D-ribose 1-diphosphate. It participates in pyrimidine metabolism; UMP biosynthesis via de novo pathway; UMP from orotate: step 1/2. In terms of biological role, catalyzes the transfer of a ribosyl phosphate group from 5-phosphoribose 1-diphosphate to orotate, leading to the formation of orotidine monophosphate (OMP). The chain is Orotate phosphoribosyltransferase from Bacillus caldolyticus.